A 159-amino-acid polypeptide reads, in one-letter code: S-ribosylhomocysteine lyase (159 aa).

Positions 53, 57, and 124 each coordinate Fe cation.

It belongs to the LuxS family. As to quaternary structure, homodimer. Fe cation is required as a cofactor.

The catalysed reaction is S-(5-deoxy-D-ribos-5-yl)-L-homocysteine = (S)-4,5-dihydroxypentane-2,3-dione + L-homocysteine. Involved in the synthesis of autoinducer 2 (AI-2) which is secreted by bacteria and is used to communicate both the cell density and the metabolic potential of the environment. The regulation of gene expression in response to changes in cell density is called quorum sensing. Catalyzes the transformation of S-ribosylhomocysteine (RHC) to homocysteine (HC) and 4,5-dihydroxy-2,3-pentadione (DPD). This chain is S-ribosylhomocysteine lyase, found in Clostridium beijerinckii (strain ATCC 51743 / NCIMB 8052) (Clostridium acetobutylicum).